We begin with the raw amino-acid sequence, 258 residues long: Leucyl/phenylalanyl-tRNA--protein transferase (258 aa).

This sequence belongs to the L/F-transferase family.

Its subcellular location is the cytoplasm. The catalysed reaction is N-terminal L-lysyl-[protein] + L-leucyl-tRNA(Leu) = N-terminal L-leucyl-L-lysyl-[protein] + tRNA(Leu) + H(+). It catalyses the reaction N-terminal L-arginyl-[protein] + L-leucyl-tRNA(Leu) = N-terminal L-leucyl-L-arginyl-[protein] + tRNA(Leu) + H(+). The enzyme catalyses L-phenylalanyl-tRNA(Phe) + an N-terminal L-alpha-aminoacyl-[protein] = an N-terminal L-phenylalanyl-L-alpha-aminoacyl-[protein] + tRNA(Phe). Its function is as follows. Functions in the N-end rule pathway of protein degradation where it conjugates Leu, Phe and, less efficiently, Met from aminoacyl-tRNAs to the N-termini of proteins containing an N-terminal arginine or lysine. The sequence is that of Leucyl/phenylalanyl-tRNA--protein transferase from Alkalilimnicola ehrlichii (strain ATCC BAA-1101 / DSM 17681 / MLHE-1).